The chain runs to 827 residues: Cell surface glycoprotein (827 aa).

Residues 1–34 form the signal peptide; that stretch reads MTKLKDQTRAILLATLMVTSVFAGAIAFTGSAAA. The N-linked (Glc...) asparagine glycan is linked to Asn-47. The segment covering 73 to 102 has biased composition (polar residues); that stretch reads PLLTGTAGNSEGVSLDLSSPIPQTTENQPL. The tract at residues 73 to 111 is disordered; the sequence is PLLTGTAGNSEGVSLDLSSPIPQTTENQPLGTYDVDGSG. 5 N-linked (Glc...) asparagine glycosylation sites follow: Asn-117, Asn-308, Asn-313, Asn-532, and Asn-766. The tract at residues 755–804 is disordered; sequence SEREDTTTSSDNATDTTTTTDGPTETTTTAEPTETTEEPTEETTTSSNTP. Residues 761–787 are compositionally biased toward low complexity; that stretch reads TTSSDNATDTTTTTDGPTETTTTAEPT. Residues 804 to 806 carry the PGF sorting signal motif; the sequence is PGF. A helical membrane pass occupies residues 804–823; sequence PGFGIAVALVALVGAALLAL.

It belongs to the halobacterial S-layer protein family. Post-translationally, O-glycosylated on 4 to 6 threonine residues; glycans consist of Glc-Gal disaccharides. The N-terminus is not blocked. In terms of processing, cleaved by the archaeosortase ArtA at the C-terminus, with removal of a short hydrophobic segment. Post-translationally, lipidation: Following protein translocation across the membrane, the protein is modified by a derivative of mevalonic acid. Lipid modification is ArtA-dependent and requires the conserved C-terminal PGF motif. Asn-47 and Asn-117 are glycosylated by a pentasaccharide comprising a hexose, 2 hexuronic acids, a methyl ester of a hexuronic acid and mannose. The pentasaccharide is produced in 2 steps: first, a tetrasaccharide is built on dolichol-P and then transferred to the S-layer glycoprotein. Then, the mannose fifth sugar is attached to a distinct molecule of dolichol-P and is transferred to the protein already carrying the tetrasaccharide. The pentasaccharide on Asn-47 was initially thought to contain mannose, galactose, glucose and idose with a relative ratio of 1/3/3/0.2. However, it was later shown that it is not the case. Under low-salt conditions (1.75 M instead of 3.4 M), a tetrasaccharide consisting of a sulfated hexose, 2 hexoses and rhamnose is attached to Asn-532.

The protein resides in the secreted. It is found in the cell wall. Its subcellular location is the S-layer. It localises to the cell membrane. In terms of biological role, S-layer protein. The S-layer is a paracrystalline mono-layered assembly of proteins which coat the surface of the cell. The chain is Cell surface glycoprotein (csg) from Haloferax volcanii (strain ATCC 29605 / DSM 3757 / JCM 8879 / NBRC 14742 / NCIMB 2012 / VKM B-1768 / DS2) (Halobacterium volcanii).